A 593-amino-acid polypeptide reads, in one-letter code: UvrABC system protein C (593 aa).

A GIY-YIG domain is found at aspartate 14–isoleucine 91. Residues asparagine 196–leucine 231 enclose the UVR domain.

Belongs to the UvrC family. As to quaternary structure, interacts with UvrB in an incision complex.

The protein resides in the cytoplasm. The UvrABC repair system catalyzes the recognition and processing of DNA lesions. UvrC both incises the 5' and 3' sides of the lesion. The N-terminal half is responsible for the 3' incision and the C-terminal half is responsible for the 5' incision. The sequence is that of UvrABC system protein C from Streptococcus agalactiae serotype Ia (strain ATCC 27591 / A909 / CDC SS700).